The following is a 498-amino-acid chain: ATP synthase subunit beta, chloroplastic (498 aa).

172 to 179 (GGAGVGKT) is an ATP binding site.

This sequence belongs to the ATPase alpha/beta chains family. In terms of assembly, F-type ATPases have 2 components, CF(1) - the catalytic core - and CF(0) - the membrane proton channel. CF(1) has five subunits: alpha(3), beta(3), gamma(1), delta(1), epsilon(1). CF(0) has four main subunits: a(1), b(1), b'(1) and c(9-12).

The protein localises to the plastid. It is found in the chloroplast thylakoid membrane. The catalysed reaction is ATP + H2O + 4 H(+)(in) = ADP + phosphate + 5 H(+)(out). Its function is as follows. Produces ATP from ADP in the presence of a proton gradient across the membrane. The catalytic sites are hosted primarily by the beta subunits. This Chamaerops humilis (Mediterranean fan palm) protein is ATP synthase subunit beta, chloroplastic.